The chain runs to 362 residues: Very-long-chain (3R)-3-hydroxyacyl-CoA dehydratase (362 aa).

Residues 1–149 (MADCSLRPHV…DPFKHLKKGY (149 aa)) are Cytoplasmic-facing. Residues 5–94 (SLRPHVHWAQ…KESSWWERLT (90 aa)) enclose the CS domain. Residues 111–135 (LDESDAEMELKEKEEEKINKMKIES) adopt a coiled-coil conformation. A helical membrane pass occupies residues 150-170 (LIMYNLVQFLGFSWIFVNMTV). The Lumenal portion of the chain corresponds to 171-189 (RLFILGKDSFYDTFHTIAD). Residues 190–210 (MMYFCQTLALMEILNSLIGLV) form a helical membrane-spanning segment. Topologically, residues 211–212 (RS) are cytoplasmic. A helical transmembrane segment spans residues 213–233 (PLIPAVIQVFGRNFILFVVLG). Over 234-242 (SLEEMQSKA) the chain is Lumenal. A helical transmembrane segment spans residues 243–263 (VVFFLFYFWSIIELFRYPYYM). At 264–282 (LSCMGIEWKPLTWLRYTSW) the chain is on the cytoplasmic side. The chain crosses the membrane as a helical span at residues 283–303 (IPLYPLGGLAEAVCLIQSIPI). Catalysis depends on residues tyrosine 286 and glutamate 293. Residues 304-319 (FSETGKFSLGLPNPLN) are Lumenal-facing. Residues 320 to 340 (VTIQFSFLLQMYLIALFLGLF) form a helical membrane-spanning segment. The Cytoplasmic portion of the chain corresponds to 341 to 362 (VNFRYLYKQRKQHLGPKKRKMK).

The protein belongs to the very long-chain fatty acids dehydratase HACD family.

Its subcellular location is the endoplasmic reticulum membrane. It carries out the reaction a very-long-chain (3R)-3-hydroxyacyl-CoA = a very-long-chain (2E)-enoyl-CoA + H2O. It catalyses the reaction (3R)-hydroxyhexadecanoyl-CoA = (2E)-hexadecenoyl-CoA + H2O. Its pathway is lipid metabolism; fatty acid biosynthesis. Catalyzes the third of the four reactions of the long-chain fatty acids elongation cycle. This endoplasmic reticulum-bound enzymatic process, allows the addition of two carbons to the chain of long- and very long-chain fatty acids/VLCFAs per cycle. This enzyme catalyzes the dehydration of the 3-hydroxyacyl-CoA intermediate into trans-2,3-enoyl-CoA, within each cycle of fatty acid elongation. Thereby, it participates in the production of VLCFAs of different chain lengths that are involved in multiple biological processes as precursors of membrane lipids and lipid mediators. Involved in Rac1-signaling pathways leading to the modulation of gene expression. This Gallus gallus (Chicken) protein is Very-long-chain (3R)-3-hydroxyacyl-CoA dehydratase.